Consider the following 100-residue polypeptide: Small ribosomal subunit protein uS14c (100 aa).

It belongs to the universal ribosomal protein uS14 family. Part of the 30S ribosomal subunit.

The protein localises to the plastid. It localises to the chloroplast. Functionally, binds 16S rRNA, required for the assembly of 30S particles. The sequence is that of Small ribosomal subunit protein uS14c from Lepidium virginicum (Virginia pepperweed).